Reading from the N-terminus, the 137-residue chain is Large-conductance mechanosensitive channel (137 aa).

2 helical membrane-spanning segments follow: residues 10 to 30 (FAMR…AAFG) and 76 to 96 (GVFI…FVAI).

Belongs to the MscL family. Homopentamer.

The protein resides in the cell inner membrane. Functionally, channel that opens in response to stretch forces in the membrane lipid bilayer. May participate in the regulation of osmotic pressure changes within the cell. This Salmonella choleraesuis (strain SC-B67) protein is Large-conductance mechanosensitive channel.